Consider the following 336-residue polypeptide: MAIPKVGINGFGRIGRIVLRNALVAKTIQVVAINDPFIDLEYMAYMFKYDSTHGRFDGSVEIKDGKLVIDGNAIDVHNERDPADIKWSTSGADYVIESTGVFTTQETASAHLKGGAKRVIISAPSKDAPMYVVGVNEEKFNPSEKVISNASCTTNCLAPLAKVINDTFGIEEGLMTTVHATTATQKTVDGPSKKDWRGGRGASANIIPSSTGAAKAVGKVIPALNGKLTGMAFRVPTPDVSVVDLTVKLAKPTNYEDIKAAIKAASEGPMKGVLGYTEDAVVSTDFCGDNHSSIFDASAGIQLSPQFVKLVSWYDNEWGYSRRVVDLVAYTAAKDN.

Residues 13 to 14 (RI) and Asp-35 contribute to the NAD(+) site. A Phosphoserine modification is found at Ser-59. Position 80 (Arg-80) interacts with NAD(+). Ser-125 bears the Phosphoserine mark. Residues 151–153 (SCT), Thr-182, 211–212 (TG), and Arg-234 contribute to the D-glyceraldehyde 3-phosphate site. The Nucleophile role is filled by Cys-152. An NAD(+)-binding site is contributed by Asn-316.

The protein belongs to the glyceraldehyde-3-phosphate dehydrogenase family. In terms of assembly, homotetramer.

Its subcellular location is the cytoplasm. It carries out the reaction D-glyceraldehyde 3-phosphate + phosphate + NAD(+) = (2R)-3-phospho-glyceroyl phosphate + NADH + H(+). The protein operates within carbohydrate degradation; glycolysis; pyruvate from D-glyceraldehyde 3-phosphate: step 1/5. The polypeptide is Glyceraldehyde-3-phosphate dehydrogenase 1 (tdh1) (Schizosaccharomyces pombe (strain 972 / ATCC 24843) (Fission yeast)).